A 344-amino-acid chain; its full sequence is Deoxyhypusine hydroxylase (344 aa).

HEAT-like PBS-type repeat units follow at residues 81–107 (LKHELAYCLGQTANGAAIPYLTAVLED) and 115–140 (RHEAAEALGALGDVASLGVLKRFRDR). Fe cation is bound by residues histidine 83, glutamate 84, histidine 116, and glutamate 117. The interval 169–188 (EKLRASDFSSVDPAPPTAQG) is disordered. HEAT-like PBS-type repeat units lie at residues 210 to 240 (KRYRAMFALRDLASPPDLPTAVPAVLALAKG), 248 to 274 (FRHEIAFVFGQLAHPASIPALTEALSN), and 281 to 308 (VRHEAAEALGSLGDEEGVEETLRKFLHD). 4 residues coordinate Fe cation: histidine 250, glutamate 251, histidine 283, and glutamate 284.

It belongs to the deoxyhypusine hydroxylase family. The cofactor is Fe(2+).

The protein localises to the cytoplasm. The protein resides in the nucleus. It catalyses the reaction [eIF5A protein]-deoxyhypusine + AH2 + O2 = [eIF5A protein]-hypusine + A + H2O. Its pathway is protein modification; eIF5A hypusination. Functionally, catalyzes the hydroxylation of the N(6)-(4-aminobutyl)-L-lysine intermediate to form hypusine, an essential post-translational modification only found in mature eIF-5A factor. This chain is Deoxyhypusine hydroxylase, found in Chaetomium globosum (strain ATCC 6205 / CBS 148.51 / DSM 1962 / NBRC 6347 / NRRL 1970) (Soil fungus).